We begin with the raw amino-acid sequence, 91 residues long: MTKELCMRCYISGRVQGVWFRASAKKLAEQLMISGWARNLADGRVEVFACGKEDKLEEFYTWLQKGPLNARVDVCTRENLPWEDYISFDVL.

In terms of domain architecture, Acylphosphatase-like spans Cys-6 to Leu-91. Residues Arg-21 and Asn-39 contribute to the active site.

This sequence belongs to the acylphosphatase family.

The enzyme catalyses an acyl phosphate + H2O = a carboxylate + phosphate + H(+). The polypeptide is Acylphosphatase (acyP) (Legionella pneumophila (strain Corby)).